Consider the following 323-residue polypeptide: Small ribosomal subunit protein uS3 (323 aa).

Residues 17-86 form the KH type-2 domain; sequence IDEFFADELG…DPQIDVQEVD (70 aa). Residues 251–303 are disordered; that stretch reads ADPGVSSEDEEVVTEPVDIGGDDEDVEDIEVVSDDSGNDTETVAEEVEELDAE. The segment covering 270-303 has biased composition (acidic residues); it reads GGDDEDVEDIEVVSDDSGNDTETVAEEVEELDAE.

This sequence belongs to the universal ribosomal protein uS3 family. In terms of assembly, part of the 30S ribosomal subunit.

Its function is as follows. Binds the lower part of the 30S subunit head. This is Small ribosomal subunit protein uS3 from Haloquadratum walsbyi (strain DSM 16790 / HBSQ001).